The following is a 207-amino-acid chain: Protein GET1 (207 aa).

The Lumenal portion of the chain corresponds to 1-4; the sequence is MPSL. The chain crosses the membrane as a helical span at residues 5–24; sequence LISVLFLHIAIYIINTIAAS. Over 25–110 the chain is Cytoplasmic; that stretch reads TIDSLLWLIY…FFDVAVKALR (86 aa). Residues 44–97 are a coiled coil; sequence IAREQHQMKLEVVQLKREMNATSSQDEFAKWAKLRRRHDKALEEYEVKNKQFSR. The helical transmembrane segment at 111–131 threads the bilayer; it reads WAGTSGLIVFLQFWFSKTPIF. The Lumenal portion of the chain corresponds to 132–155; that stretch reads TLPPSWIPWQVEWVLSFPRAPMGT. A helical transmembrane segment spans residues 156-172; sequence VSIQVWGGACAVVVALI. Residues 173–207 lie on the Cytoplasmic side of the membrane; the sequence is GEAIGATVRYLYASKDSMEAIKVGAGAVEKEKKRQ.

The protein belongs to the WRB/GET1 family. Interacts with GET3.

It is found in the endoplasmic reticulum membrane. Required for the post-translational delivery of tail-anchored (TA) proteins to the endoplasmic reticulum. Acts as a membrane receptor for soluble GET3, which recognizes and selectively binds the transmembrane domain of TA proteins in the cytosol. The sequence is that of Protein GET1 from Paracoccidioides brasiliensis (strain Pb18).